The chain runs to 373 residues: tRNA (guanine(26)-N(2))-dimethyltransferase (373 aa).

The 364-residue stretch at 2–365 (KIISEGETKL…AELSDLVVLI (364 aa)) folds into the Trm1 methyltransferase domain. S-adenosyl-L-methionine is bound by residues Arg-35, Arg-66, Asp-86, Asp-113, and Ala-114.

The protein belongs to the class I-like SAM-binding methyltransferase superfamily. Trm1 family.

The enzyme catalyses guanosine(26) in tRNA + 2 S-adenosyl-L-methionine = N(2)-dimethylguanosine(26) in tRNA + 2 S-adenosyl-L-homocysteine + 2 H(+). Dimethylates a single guanine residue at position 26 of a number of tRNAs using S-adenosyl-L-methionine as donor of the methyl groups. This chain is tRNA (guanine(26)-N(2))-dimethyltransferase, found in Methanococcus maripaludis (Methanococcus deltae).